We begin with the raw amino-acid sequence, 293 residues long: Bifunctional protein FolD (293 aa).

Residues 165 to 167, serine 190, and isoleucine 231 each bind NADP(+); that span reads GRS.

This sequence belongs to the tetrahydrofolate dehydrogenase/cyclohydrolase family. In terms of assembly, homodimer.

It carries out the reaction (6R)-5,10-methylene-5,6,7,8-tetrahydrofolate + NADP(+) = (6R)-5,10-methenyltetrahydrofolate + NADPH. The catalysed reaction is (6R)-5,10-methenyltetrahydrofolate + H2O = (6R)-10-formyltetrahydrofolate + H(+). Its pathway is one-carbon metabolism; tetrahydrofolate interconversion. Functionally, catalyzes the oxidation of 5,10-methylenetetrahydrofolate to 5,10-methenyltetrahydrofolate and then the hydrolysis of 5,10-methenyltetrahydrofolate to 10-formyltetrahydrofolate. This chain is Bifunctional protein FolD, found in Synechococcus sp. (strain CC9311).